A 467-amino-acid chain; its full sequence is Flagellum-specific ATP synthase (467 aa).

180 to 187 (AGSGVGKS) serves as a coordination point for ATP.

This sequence belongs to the ATPase alpha/beta chains family.

It is found in the cytoplasm. It catalyses the reaction ATP + H2O + 4 H(+)(in) = ADP + phosphate + 5 H(+)(out). In terms of biological role, probable catalytic subunit of a protein translocase for flagellum-specific export, or a proton translocase involved in local circuits at the flagellum. This is Flagellum-specific ATP synthase (fliI) from Rhizobium meliloti (strain 1021) (Ensifer meliloti).